Consider the following 501-residue polypeptide: MSETEFHHGAQAGLELLRSSNSPTSASQSAGMTVTDQAFVTLATNDIYCQGALVLGQSLRRHRLTRKLVVLITPQVSSLLRVILSKVFDEVIEVNLIDSADYIHLAFLKRPELGLTLTKLHCWTLTHYSKCVFLDADTLVLSNVDELFDRGEFSAAPDPGWPDCFNSGVFVFQPSLHTHKLLLQHAMEHGSFDGADQGLLNSFFRNWSTTDIHKHLPFIYNLSSNTMYTYSPAFKQFGSSAKVVHFLGSMKPWNYKYNPQSGSVLEQGSASSSQHQAAFLHLWWTVYQNNVLPLYKSVQAGEARASPGHTLCHSDVGGPCADSASGVGEPCENSTPSAGVPCANSPLGSNQPAQGLPEPTQIVDETLSLPEGRRSEDMIACPETETPAVITCDPLSQPSPQPADFTETETILQPANKVESVSSEETFEPSQELPAEALRDPSLQDALEVDLAVSVSQISIEEKVKELSPEEERRKWEEGRIDYMGKDAFARIQEKLDRFLQ.

UDP is bound by residues L42, T44, N45, Y48, and R110. Residues L42, T44, N45, Y48, R110, K119, D135, A136, D137, N166, S167, D193, D196, and Q197 each coordinate UDP-alpha-D-glucose. UDP-binding residues include D135, A136, and D137. D135 contributes to the Mn(2+) binding site. Position 137 (D137) interacts with Mn(2+). A glycan (O-linked (Glc...) tyrosine) is linked at Y228. Positions 245, 248, and 251 each coordinate UDP. H245 provides a ligand contact to Mn(2+). The UDP-alpha-D-glucose site is built by G248 and K251. Phosphoserine is present on residues S368, S399, and S459.

Homodimer, tightly complexed to glycogen synthase. Mn(2+) serves as cofactor. Post-translationally, self-glycosylated by the transfer of glucose residues from UDP-glucose to itself, forming an alpha-1,4-glycan of around 10 residues attached to Tyr-228. Detected in liver (at protein level). Expressed preferentially in liver, heart, and pancreas.

Its subcellular location is the cytoplasm. The protein localises to the nucleus. The catalysed reaction is L-tyrosyl-[glycogenin] + UDP-alpha-D-glucose = alpha-D-glucosyl-L-tyrosyl-[glycogenin] + UDP + H(+). It catalyses the reaction [1,4-alpha-D-glucosyl](n)-L-tyrosyl-[glycogenin] + UDP-alpha-D-glucose = [1,4-alpha-D-glucosyl](n+1)-L-tyrosyl-[glycogenin] + UDP + H(+). Its pathway is glycan biosynthesis; glycogen biosynthesis. In terms of biological role, glycogenin participates in the glycogen biosynthetic process along with glycogen synthase and glycogen branching enzyme. It catalyzes the formation of a short alpha (1,4)-glucosyl chain covalently attached via a glucose 1-O-tyrosyl linkage to internal tyrosine residues and these chains act as primers for the elongation reaction catalyzed by glycogen synthase. The polypeptide is Glycogenin-2 (GYG2) (Homo sapiens (Human)).